The chain runs to 359 residues: Phosphoserine aminotransferase (359 aa).

Arginine 41 provides a ligand contact to L-glutamate. Residues tryptophan 101, threonine 151, aspartate 170, and glutamine 193 each coordinate pyridoxal 5'-phosphate. Lysine 194 is subject to N6-(pyridoxal phosphate)lysine. 235–236 contacts pyridoxal 5'-phosphate; the sequence is NT.

It belongs to the class-V pyridoxal-phosphate-dependent aminotransferase family. SerC subfamily. Homodimer. Requires pyridoxal 5'-phosphate as cofactor.

The protein localises to the cytoplasm. The catalysed reaction is O-phospho-L-serine + 2-oxoglutarate = 3-phosphooxypyruvate + L-glutamate. It carries out the reaction 4-(phosphooxy)-L-threonine + 2-oxoglutarate = (R)-3-hydroxy-2-oxo-4-phosphooxybutanoate + L-glutamate. It participates in amino-acid biosynthesis; L-serine biosynthesis; L-serine from 3-phospho-D-glycerate: step 2/3. It functions in the pathway cofactor biosynthesis; pyridoxine 5'-phosphate biosynthesis; pyridoxine 5'-phosphate from D-erythrose 4-phosphate: step 3/5. Functionally, catalyzes the reversible conversion of 3-phosphohydroxypyruvate to phosphoserine and of 3-hydroxy-2-oxo-4-phosphonooxybutanoate to phosphohydroxythreonine. The protein is Phosphoserine aminotransferase of Laribacter hongkongensis (strain HLHK9).